Reading from the N-terminus, the 359-residue chain is tRNA-specific 2-thiouridylase MnmA (359 aa).

ATP-binding positions include 7–14 and Met-33; that span reads AMSGGVDS. Catalysis depends on Cys-101, which acts as the Nucleophile. Cys-101 and Cys-198 are oxidised to a cystine. Gly-125 contacts ATP. An interaction with tRNA region spans residues 148–150; it reads KDQ. The active-site Cysteine persulfide intermediate is the Cys-198.

Belongs to the MnmA/TRMU family.

It is found in the cytoplasm. It catalyses the reaction S-sulfanyl-L-cysteinyl-[protein] + uridine(34) in tRNA + AH2 + ATP = 2-thiouridine(34) in tRNA + L-cysteinyl-[protein] + A + AMP + diphosphate + H(+). Its function is as follows. Catalyzes the 2-thiolation of uridine at the wobble position (U34) of tRNA, leading to the formation of s(2)U34. This Chloroflexus aurantiacus (strain ATCC 29366 / DSM 635 / J-10-fl) protein is tRNA-specific 2-thiouridylase MnmA.